The primary structure comprises 155 residues: RING finger protein 122 (155 aa).

Residues 40 to 60 form a helical membrane-spanning segment; sequence VIFGTGIFVFMLSLIFCCYFI. The RING-type; atypical zinc finger occupies 93-134; that stretch reads CAVCLEDFKGKDELGVLPCQHAFHRKCLVKWLEVRCVCPMCN.

It localises to the golgi apparatus. Its subcellular location is the endoplasmic reticulum. It is found in the membrane. Its function is as follows. May induce necrosis and apoptosis. May play a role in cell viability. The polypeptide is RING finger protein 122 (Rnf122) (Mus musculus (Mouse)).